A 120-amino-acid polypeptide reads, in one-letter code: Large ribosomal subunit protein uL18 (120 aa).

It belongs to the universal ribosomal protein uL18 family. Part of the 50S ribosomal subunit; part of the 5S rRNA/L5/L18/L25 subcomplex. Contacts the 5S and 23S rRNAs.

This is one of the proteins that bind and probably mediate the attachment of the 5S RNA into the large ribosomal subunit, where it forms part of the central protuberance. In Janthinobacterium sp. (strain Marseille) (Minibacterium massiliensis), this protein is Large ribosomal subunit protein uL18.